The following is a 556-amino-acid chain: MELCGLGLPRPPMLLALLLATLLAAMLALLTQVALVVQVAEAARAPSVSAKPGPALWPLPLLVKMTPNLLHLAPENFYISHSPNSTAGPSCTLLEEAFRRYHGYIFGFYKWHHEPAEFQAKTQVQQLLVSITLQSECDAFPNISSDESYTLLVKEPVAVLKANRVWGALRGLETFSQLVYQDSYGTFTINESTIIDSPRFSHRGILIDTSRHYLPVKIILKTLDAMAFNKFNVLHWHIVDDQSFPYQSITFPELSNKGSYSLSHVYTPNDVRMVIEYARLRGIRVLPEFDTPGHTLSWGKGQKDLLTPCYSRQNKLDSFGPINPTLNTTYSFLTTFFKEISEVFPDQFIHLGGDEVEFKCWESNPKIQDFMRQKGFGTDFKKLESFYIQKVLDIIATINKGSIVWQEVFDDKAKLAPGTIVEVWKDSAYPEELSRVTASGFPVILSAPWYLDLISYGQDWRKYYKVEPLDFGGTQKQKQLFIGGEACLWGEYVDATNLTPRLWPRASAVGERLWSSKDVRDMDDAYDRLTRHRCRMVERGIAAQPLYAGYCNHENM.

Residues 1 to 42 (MELCGLGLPRPPMLLALLLATLLAAMLALLTQVALVVQVAEA) form the signal peptide. A propeptide spanning residues 43-121 (ARAPSVSAKP…HHEPAEFQAK (79 aa)) is cleaved from the precursor. A glycan (N-linked (GlcNAc...) asparagine) is linked at Asn84. A disulfide bridge links Cys91 with Cys137. N-linked (GlcNAc...) asparagine glycosylation is found at Asn142, Asn190, and Asn327. Disulfide bonds link Cys309–Cys360 and Cys534–Cys551. Catalysis depends on Glu355, which acts as the Proton donor.

It belongs to the glycosyl hydrolase 20 family. There are 3 forms of beta-hexosaminidase: hexosaminidase A is a heterodimer composed of one subunit alpha and one subunit beta (chain A and B); hexosaminidase B is a homodimer of two beta subunits (two chains A and B); hexosaminidase S is a homodimer of two alpha subunits. The composition of the dimer (isozyme A versus isozyme S) has a significant effect on the substrate specificity of the alpha subunit active site. Post-translationally, N-linked glycans at Asn-142 and Asn-190 consist of Man(3)-GlcNAc(2) and Man(5 to 7)-GlcNAc(2), respectively. In terms of processing, the beta-A and beta-B chains are produced by proteolytic processing of the precursor beta chain.

Its subcellular location is the lysosome. The protein resides in the cytoplasmic vesicle. The protein localises to the secretory vesicle. It localises to the cortical granule. It catalyses the reaction Hydrolysis of terminal non-reducing N-acetyl-D-hexosamine residues in N-acetyl-beta-D-hexosaminides.. The catalysed reaction is N-acetyl-beta-D-galactosaminyl-(1-&gt;4)-beta-D-3-sulfogalactosyl-(1-&gt;4)-beta-D-glucosyl-(1&lt;-&gt;1')-ceramide + H2O = a beta-D-3-sulfogalactosyl-(1-&gt;4)-beta-D-glucosyl-(1&lt;-&gt;1')-ceramide + N-acetyl-beta-D-galactosamine. The enzyme catalyses a ganglioside GM2 (d18:1(4E)) + H2O = a ganglioside GM3 (d18:1(4E)) + N-acetyl-beta-D-galactosamine. It carries out the reaction a ganglioside GM2 + H2O = a ganglioside GM3 + N-acetyl-beta-D-galactosamine. It catalyses the reaction beta-D-GalNAc-(1-&gt;4)-alpha-L-IdoA-(1-&gt;3)-beta-D-GalNAc-4-sulfate-(1-&gt;4)-alpha-L-IdoA-(1-&gt;3)-D-GalNAc-4-sulfate + H2O = alpha-L-IdoA-(1-&gt;3)-beta-D-GalNAc-4-sulfate-(1-&gt;4)-alpha-L-IdoA-(1-&gt;3)-D-GalNAc-4-sulfate + N-acetyl-D-galactosamine. The catalysed reaction is N-acetyl-beta-D-6-sulfogalactosaminyl-(1-&gt;4)-alpha-L-iduronyl-(1-&gt;3)-N-acetyl-D-6-sulfogalactosamine + H2O = alpha-L-iduronyl-(1-&gt;3)-N-acetyl-D-6-sulfogalactosamine + N-acetyl-D-6-sulfogalactosamine. Addition of GM2A stimulates the hydrolysis of sulfated glycosphingolipid SM2 and the ganglioside GM2. Hydrolyzes the non-reducing end N-acetyl-D-hexosamine and/or sulfated N-acetyl-D-hexosamine of glycoconjugates, such as the oligosaccharide moieties from proteins and neutral glycolipids, or from certain mucopolysaccharides. The isozyme B does not hydrolyze each of these substrates, however hydrolyzes efficiently neutral oligosaccharide. Only the isozyme A is responsible for the degradation of GM2 gangliosides in the presence of GM2A. During fertilization is responsible, at least in part, for the zona block to polyspermy. Present in the cortical granules of non-activated oocytes, is exocytosed during the cortical reaction in response to oocyte activation and inactivates the sperm galactosyltransferase-binding site, accounting for the block in sperm binding to the zona pellucida. This is Beta-hexosaminidase subunit beta from Homo sapiens (Human).